Reading from the N-terminus, the 115-residue chain is NADH-ubiquinone oxidoreductase chain 3 (115 aa).

The next 3 helical transmembrane spans lie at 4–24 (LMVM…AFWL), 55–75 (FFLV…LLPL), and 87–107 (MMLT…YEWM).

It belongs to the complex I subunit 3 family. In terms of assembly, core subunit of respiratory chain NADH dehydrogenase (Complex I) which is composed of 45 different subunits. Interacts with TMEM186. Interacts with TMEM242.

It localises to the mitochondrion inner membrane. It catalyses the reaction a ubiquinone + NADH + 5 H(+)(in) = a ubiquinol + NAD(+) + 4 H(+)(out). Its function is as follows. Core subunit of the mitochondrial membrane respiratory chain NADH dehydrogenase (Complex I) which catalyzes electron transfer from NADH through the respiratory chain, using ubiquinone as an electron acceptor. Essential for the catalytic activity of complex I. In Peromyscus mexicanus (Mexican deer mouse), this protein is NADH-ubiquinone oxidoreductase chain 3.